A 535-amino-acid polypeptide reads, in one-letter code: Dipeptide-binding protein (535 aa).

The first 28 residues, 1 to 28, serve as a signal peptide directing secretion; it reads MRISLKKSGMLKLGLSLVAMTVAASVQA. C34 and C262 are oxidised to a cystine. Residues 48-50, 383-385, and 433-436 contribute to the glycyl-L-leucine site; these read TSG, RPY, and WTGD. The cysteines at positions 450 and 463 are disulfide-linked.

Belongs to the bacterial solute-binding protein 5 family. The complex is composed of two ATP-binding proteins (DppD and DppF), two transmembrane proteins (DppB and DppC) and a solute-binding protein (DppA).

It is found in the periplasm. Heme binding is inhibited by dipeptide. Part of the ABC transporter DppABCDF involved in dipeptide transport. Binds dipeptides and accepts a wide range of side chains, including small neutral, bulky hydrophobic, and positively and negatively charged groups. Tripeptides are poor substrates. DppA alone controls the specificity of the Dpp transporter. In addition, plays a role in chemotaxis toward peptides via interaction with the chemotaxis protein Tap. Its function is as follows. Binds heme. When a foreign outer membrane heme receptor is expressed in E.coli, DppABCDF can also transport heme and its precursor, 5-aminolevulinic acid (ALA), from the periplasm into the cytoplasm. This is Dipeptide-binding protein from Escherichia coli (strain K12).